A 158-amino-acid chain; its full sequence is UPF0260 protein RL1394 (158 aa).

The protein belongs to the UPF0260 family.

This is UPF0260 protein RL1394 from Rhizobium johnstonii (strain DSM 114642 / LMG 32736 / 3841) (Rhizobium leguminosarum bv. viciae).